A 318-amino-acid polypeptide reads, in one-letter code: NADH-ubiquinone oxidoreductase chain 1 (318 aa).

8 helical membrane-spanning segments follow: residues 2–22 (FTIN…FLTL), 70–90 (LYMA…TPLP), 98–118 (FNLG…SILW), 140–160 (ISYG…SGSF), 173–193 (WLLL…LAET), 217–237 (AGSF…MNAL), 253–273 (ELYT…FLWI), and 294–314 (LPLT…LSGI).

This sequence belongs to the complex I subunit 1 family.

Its subcellular location is the mitochondrion inner membrane. The enzyme catalyses a ubiquinone + NADH + 5 H(+)(in) = a ubiquinol + NAD(+) + 4 H(+)(out). Functionally, core subunit of the mitochondrial membrane respiratory chain NADH dehydrogenase (Complex I) that is believed to belong to the minimal assembly required for catalysis. Complex I functions in the transfer of electrons from NADH to the respiratory chain. The immediate electron acceptor for the enzyme is believed to be ubiquinone. This is NADH-ubiquinone oxidoreductase chain 1 (MT-ND1) from Sapajus apella (Brown-capped capuchin).